The sequence spans 221 residues: uncharacterized protein (221 aa).

2 stretches are compositionally biased toward low complexity: residues 1–27 and 140–162; these read MNNNNNNNNNNNNNNNNNNNNNNNNNN and TTTSSTTTTTTTTSTTTTNNSSS. 2 disordered regions span residues 1–28 and 140–205; these read MNNNNNNNNNNNNNNNNNNNNNNNNNNE and TTTS…NIGG.

This is an uncharacterized protein from Dictyostelium discoideum (Social amoeba).